We begin with the raw amino-acid sequence, 34 residues long: Photosystem II reaction center protein M (34 aa).

Residues 6–26 form a helical membrane-spanning segment; the sequence is LGAIATALFVFIPCVFLILLY.

Belongs to the PsbM family. As to quaternary structure, PSII is composed of 1 copy each of membrane proteins PsbA, PsbB, PsbC, PsbD, PsbE, PsbF, PsbH, PsbI, PsbJ, PsbK, PsbL, PsbM, PsbT, PsbX, PsbY, PsbZ, Psb30/Ycf12, peripheral proteins PsbO, CyanoQ (PsbQ), PsbU, PsbV and a large number of cofactors. It forms dimeric complexes.

Its subcellular location is the cellular thylakoid membrane. Functionally, one of the components of the core complex of photosystem II (PSII). PSII is a light-driven water:plastoquinone oxidoreductase that uses light energy to abstract electrons from H(2)O, generating O(2) and a proton gradient subsequently used for ATP formation. It consists of a core antenna complex that captures photons, and an electron transfer chain that converts photonic excitation into a charge separation. This subunit is found at the monomer-monomer interface. This chain is Photosystem II reaction center protein M, found in Acaryochloris marina (strain MBIC 11017).